The following is a 264-amino-acid chain: Large ribosomal subunit protein mL50 (264 aa).

The N-terminal 75 residues, 1 to 75, are a transit peptide targeting the mitochondrion; it reads MSSLLKLHCI…EEGTNEASSQ (75 aa).

It belongs to the mitochondrion-specific ribosomal protein mL50 family. Component of the mitochondrial large ribosomal subunit (mt-LSU). Mature yeast 74S mitochondrial ribosomes consist of a small (37S) and a large (54S) subunit. The 37S small subunit contains a 15S ribosomal RNA (15S mt-rRNA) and 34 different proteins. The 54S large subunit contains a 21S rRNA (21S mt-rRNA) and 46 different proteins.

It localises to the mitochondrion. Its function is as follows. Component of the mitochondrial ribosome (mitoribosome), a dedicated translation machinery responsible for the synthesis of mitochondrial genome-encoded proteins, including at least some of the essential transmembrane subunits of the mitochondrial respiratory chain. The mitoribosomes are attached to the mitochondrial inner membrane and translation products are cotranslationally integrated into the membrane. This is Large ribosomal subunit protein mL50 (MRPL13) from Saccharomyces cerevisiae (strain ATCC 204508 / S288c) (Baker's yeast).